Consider the following 247-residue polypeptide: uncharacterized protein (247 aa).

Its subcellular location is the mitochondrion. This is an uncharacterized protein from Schizosaccharomyces pombe (strain 972 / ATCC 24843) (Fission yeast).